The following is a 180-amino-acid chain: Type-1 fimbrial protein, C chain (180 aa).

The first 23 residues, 1–23 (MKLKFISMAVFSALTLGVATNAS), serve as a signal peptide directing secretion. Cysteines 44 and 84 form a disulfide.

This sequence belongs to the fimbrial protein family.

The protein resides in the fimbrium. Its function is as follows. Fimbriae (also called pili), polar filaments radiating from the surface of the bacterium to a length of 0.5-1.5 micrometers and numbering 100-300 per cell, enable bacteria to colonize the epithelium of specific host organs. The protein is Type-1 fimbrial protein, C chain (pilC) of Escherichia coli O6:H1 (strain CFT073 / ATCC 700928 / UPEC).